The sequence spans 339 residues: DNA-directed RNA polymerase subunit alpha (339 aa).

Residues 1–235 (MVIQKNWQEL…DQLQVFVNFE (235 aa)) are alpha N-terminal domain (alpha-NTD). Positions 251-339 (FNPALLKKVD…DLAKRFEEHY (89 aa)) are alpha C-terminal domain (alpha-CTD).

This sequence belongs to the RNA polymerase alpha chain family. As to quaternary structure, homodimer. The RNAP catalytic core consists of 2 alpha, 1 beta, 1 beta' and 1 omega subunit. When a sigma factor is associated with the core the holoenzyme is formed, which can initiate transcription.

It carries out the reaction RNA(n) + a ribonucleoside 5'-triphosphate = RNA(n+1) + diphosphate. Its function is as follows. DNA-dependent RNA polymerase catalyzes the transcription of DNA into RNA using the four ribonucleoside triphosphates as substrates. This chain is DNA-directed RNA polymerase subunit alpha, found in Methylorubrum extorquens (strain CM4 / NCIMB 13688) (Methylobacterium extorquens).